The chain runs to 30 residues: Rothein 3.1 (30 aa).

Leu-30 carries the post-translational modification Leucine amide.

In terms of tissue distribution, expressed by the skin dorsal glands.

It is found in the secreted. In terms of biological role, lacks antimicrobial activity. Does not inhibit the formation of NO by neuronal nitric oxide. The polypeptide is Rothein 3.1 (Litoria rothii (Roth's tree frog)).